The following is a 243-amino-acid chain: Venom nerve growth factor 1 (243 aa).

An N-terminal signal peptide occupies residues 1-18 (MSMLCYTLIIAFLIGIWA). Positions 19–125 (VPKSEDNAPL…ALNRNIRAKR (107 aa)) are excised as a propeptide. 3 disulfides stabilise this stretch: Cys-139/Cys-204, Cys-182/Cys-232, and Cys-192/Cys-234. An N-linked (GlcNAc...) asparagine glycan is attached at Asn-148.

This sequence belongs to the NGF-beta family. As to quaternary structure, homodimer; non-covalently linked. Expressed by the venom gland.

It localises to the secreted. In terms of biological role, nerve growth factor is important for the development and maintenance of the sympathetic and sensory nervous systems. It stimulates division and differentiation of sympathetic and embryonic sensory neurons as well as basal forebrain cholinergic neurons in the brain. Its relevance in the snake venom is not clear. However, it has been shown to inhibit metalloproteinase-dependent proteolysis of platelet glycoprotein Ib alpha, suggesting a metalloproteinase inhibition to prevent metalloprotease autodigestion and/or protection against prey proteases. Binds a lipid between the two protein chains in the homodimer. The lipid-bound form promotes histamine relase from mouse mast cells, contrary to the lipid-free form. The polypeptide is Venom nerve growth factor 1 (Naja sputatrix (Malayan spitting cobra)).